The primary structure comprises 292 residues: Protease HtpX homolog (292 aa).

2 helical membrane passes run Ile4–Leu24 and Ala42–Ser62. His147 lines the Zn(2+) pocket. Residue Glu148 is part of the active site. His151 contributes to the Zn(2+) binding site. The next 2 membrane-spanning stretches (helical) occupy residues Val158–Ile178 and Phe198–Trp218. Glu224 provides a ligand contact to Zn(2+).

The protein belongs to the peptidase M48B family. Zn(2+) serves as cofactor.

The protein resides in the cell inner membrane. The polypeptide is Protease HtpX homolog (Nitrosomonas eutropha (strain DSM 101675 / C91 / Nm57)).